The sequence spans 124 residues: MKPATHRDKGEQAEQLACHYLQARGLRLTQRNYHCRLGEIDLIMEDRESLVFIEVRYRRKGRFGDAIDSITPAKQARLIAAAQHYLQRTGGAQNKPCRFDVVGITSEKGADNIMWLRDAFRVES.

The protein belongs to the UPF0102 family.

This Nitrosococcus oceani (strain ATCC 19707 / BCRC 17464 / JCM 30415 / NCIMB 11848 / C-107) protein is UPF0102 protein Noc_0355.